The sequence spans 78 residues: Acyl carrier protein (78 aa).

The 76-residue stretch at 2-77 (SDTVERVKKI…DAVKFIDKAS (76 aa)) folds into the Carrier domain. Ser-37 is modified (O-(pantetheine 4'-phosphoryl)serine).

Belongs to the acyl carrier protein (ACP) family. In terms of processing, 4'-phosphopantetheine is transferred from CoA to a specific serine of apo-ACP by AcpS. This modification is essential for activity because fatty acids are bound in thioester linkage to the sulfhydryl of the prosthetic group.

The protein resides in the cytoplasm. It participates in lipid metabolism; fatty acid biosynthesis. Functionally, carrier of the growing fatty acid chain in fatty acid biosynthesis. The chain is Acyl carrier protein from Bartonella henselae (strain ATCC 49882 / DSM 28221 / CCUG 30454 / Houston 1) (Rochalimaea henselae).